Consider the following 156-residue polypeptide: Small ribosomal subunit protein uS7 (156 aa).

This sequence belongs to the universal ribosomal protein uS7 family. In terms of assembly, part of the 30S ribosomal subunit. Contacts proteins S9 and S11.

In terms of biological role, one of the primary rRNA binding proteins, it binds directly to 16S rRNA where it nucleates assembly of the head domain of the 30S subunit. Is located at the subunit interface close to the decoding center, probably blocks exit of the E-site tRNA. This Rhodobacter capsulatus (Rhodopseudomonas capsulata) protein is Small ribosomal subunit protein uS7.